The chain runs to 65 residues: Lantipeptide Flvbeta.h (65 aa).

Positions 1–27 (MERYGHLAGVIPVDEIDDMFESNVIGG) are cleaved as a propeptide — cleaved by FlvT. 2,3-didehydrobutyrine; by FlvM2 is present on Thr28. Positions 29 to 33 (SSIDC) form a cross-link, lanthionine (Ser-Cys); by FlvM2. Ser30 bears the 2,3-didehydroalanine (Ser); by FlvM2 mark. A 2,3-didehydrobutyrine; by FlvM2 modification is found at Thr44. Residues 48 to 54 (TVRIEFC) constitute a cross-link (beta-methyllanthionine (Thr-Cys); by FlvM2). The segment at residues 56-59 (SAAC) is a cross-link (lanthionine (Ser-Cys); by FlvM2). The beta-methyllanthionine (Thr-Cys); by FlvM2 cross-link spans 60–63 (TYSC).

Post-translationally, contains LL-lanthionine, DL-lanthionine, and DL-beta-methyllanthionine, when coepressed in E.coli with the flavecin synthetase FlvM2.

It is found in the secreted. Its function is as follows. Lanthionine-containing peptide that does probably not show antibacterial activity, since its analog [+2]Flvbeta.h does not show antibacterial activity against M.luteus. Also does not show antibiotic activity when tested with [Del2]Flvalpha.a, an analog of Flvalpha.a, which is encoded by the same operon than Flvbeta.h. The bactericidal activity of lantibiotics is based on depolarization of energized bacterial cytoplasmic membranes, initiated by the formation of aqueous transmembrane pores. The protein is Lantipeptide Flvbeta.h of Ruminococcus flavefaciens.